The following is a 791-amino-acid chain: IQ motif and ubiquitin-like domain-containing protein (791 aa).

The interval 1 to 73 (MSNQQEKYEA…SDQSFSSLEP (73 aa)) is disordered. The region spanning 131–207 (ATVKVVLIPV…VQVEIFSTNP (77 aa)) is the Ubiquitin-like domain. An IQ domain is found at 338–367 (RLKAVIVIQTYYRQWHAKIFVENLRRQKSL).

In terms of assembly, component of the axonemal radial spoke 1 (RS1) complex, at least composed of spoke head proteins RSPH1, RSPH3, RSPH9 and the cilia-specific component RSPH4A or sperm-specific component RSPH6A, spoke stalk proteins RSPH14, DNAJB13, DYDC1, ROPN1L and NME5, and the anchor protein IQUB. Does not appear to be part of radial spoke complexes 2 or 3 (RS2 or RS3). Interacts with CALM1. Interacts with DNAJB13. Interacts with DYNLL2. Interacts with NME5. Interacts with RSPH3. Interacts with RSPH9. Interacts with ZMYND10. Interacts with calmodulin; the interaction occurs in conditions of low but not high calcium.

It is found in the cytoplasm. It localises to the cytoskeleton. The protein localises to the flagellum axoneme. Its subcellular location is the cell projection. The protein resides in the cilium. Adapter protein that anchors the radial spoke 1 (RS1) complex to the A microtubule of outer doublet microtubules in axonemes. The triple radial spokes (RS1, RS2 and RS3) are required to modulate beating of the sperm flagellum. May play a role in inhibiting signaling via MAPK1/ERK2 and MAPK3/ERK1. Additionally, may play a role in the functioning of cilia. Not required for the functioning of tracheal or ependymal cilia. This Homo sapiens (Human) protein is IQ motif and ubiquitin-like domain-containing protein (IQUB).